Here is a 382-residue protein sequence, read N- to C-terminus: MSTYTRPVMLLLSGLLLLTLAIAVLNTLVPLWLAQEHMSTWQVGVVSSSYFTGNLVGTLLTGYVIKRIGFNRSYYLASFIFAAGCAGLGLMIGFWSWLAWRFVAGIGCAMIWVVVESALMCSGTSRNRGRLLAAYMMVYYVGTFLGQLLVSKVSTELMSVLPWVTGLTLAGILPLLFTHVLNQQAENHDSTSITSMLKLRQARLGVNGCIISGIVLGSLYGLMPLYLNHKGVSNASIGFWMAVLVSAGILGQWPIGRLADKFGRLLVLRVQVFVVILGSIAMLSQAAMAPALFILGAAGFTLYPVAMAWACEKVEHHQLVAMNQALLLSYTVGSLLGPSFTAMLMQNFSDNLLFIMIASVSFIYLLMLLRNAGHTPKPVAHV.

Helical transmembrane passes span 14 to 34 (GLLLLTLAIAVLNTLVPLWLA), 45 to 65 (VVSSSYFTGNLVGTLLTGYVI), 79 to 99 (FIFAAGCAGLGLMIGFWSWLA), 102 to 122 (FVAGIGCAMIWVVVESALMCS), 131 to 151 (LLAAYMMVYYVGTFLGQLLVS), 157 to 177 (LMSVLPWVTGLTLAGILPLLF), 204 to 224 (LGVNGCIISGIVLGSLYGLMP), 235 to 255 (ASIGFWMAVLVSAGILGQWPI), 270 to 290 (VQVFVVILGSIAMLSQAAMAP), 291 to 311 (ALFILGAAGFTLYPVAMAWAC), 325 to 345 (ALLLSYTVGSLLGPSFTAMLM), and 348 to 368 (FSDNLLFIMIASVSFIYLLML).

The protein belongs to the major facilitator superfamily. YcaD (TC 2.A.1.26) family.

The protein localises to the cell inner membrane. This is an uncharacterized protein from Escherichia coli O45:K1 (strain S88 / ExPEC).